A 276-amino-acid chain; its full sequence is NH(3)-dependent NAD(+) synthetase (276 aa).

Residue 43 to 50 (GISGGVDS) participates in ATP binding. Asp-49 provides a ligand contact to Mg(2+). Arg-146 lines the deamido-NAD(+) pocket. Thr-166 is an ATP binding site. A Mg(2+)-binding site is contributed by Glu-171. Residues Lys-179 and Asp-186 each coordinate deamido-NAD(+). Positions 195 and 217 each coordinate ATP. Residue 266 to 267 (HK) coordinates deamido-NAD(+).

This sequence belongs to the NAD synthetase family. As to quaternary structure, homodimer.

The enzyme catalyses deamido-NAD(+) + NH4(+) + ATP = AMP + diphosphate + NAD(+) + H(+). It participates in cofactor biosynthesis; NAD(+) biosynthesis; NAD(+) from deamido-NAD(+) (ammonia route): step 1/1. Catalyzes the ATP-dependent amidation of deamido-NAD to form NAD. Uses ammonia as a nitrogen source. This Aliivibrio fischeri (strain ATCC 700601 / ES114) (Vibrio fischeri) protein is NH(3)-dependent NAD(+) synthetase.